The primary structure comprises 480 residues: Glutathione reductase (480 aa).

Residues Ser31 and Gly32 each contribute to the FAD site. Ser31 serves as a coordination point for glutathione. Arg38 is a binding site for glutathione. Positions 51, 58, 59, and 67 each coordinate FAD. The cysteines at positions 59 and 64 are disulfide-linked. Residue Tyr121 participates in glutathione binding. Ala137 provides a ligand contact to FAD. Residues Ile206, Glu209, Arg226, and Gly291 each coordinate NADP(+). Asp331 contributes to the FAD binding site. An NADP(+)-binding site is contributed by Glu337. Residue Thr339 coordinates FAD. Arg347 is a glutathione binding site. Val372 lines the NADP(+) pocket. Lys422 provides a ligand contact to glutathione. FAD is bound at residue His469. Catalysis depends on His469, which acts as the Proton acceptor.

Belongs to the class-I pyridine nucleotide-disulfide oxidoreductase family. As to quaternary structure, homodimer. It depends on FAD as a cofactor.

Its subcellular location is the cytoplasm. The protein resides in the mitochondrion. It carries out the reaction 2 glutathione + NADP(+) = glutathione disulfide + NADPH + H(+). Catalyzes the reduction of glutathione disulfide (GSSG) to reduced glutathione (GSH). Constitutes the major mechanism to maintain a high GSH:GSSG ratio in the cytosol. The polypeptide is Glutathione reductase (GLR1) (Eremothecium gossypii (strain ATCC 10895 / CBS 109.51 / FGSC 9923 / NRRL Y-1056) (Yeast)).